The chain runs to 248 residues: MARNVRLKVEYDGTNYSGWQKQKDKNIKTIQSSIEKAIEEATKEEVELIGSSRTDAGVHALAYTANFKTCSTIPGEKFKHALNRFLPEDIVILESEEVPMEFHSRFDCIGKTYVYKILNRPLFSPIQRNYIYHVKDELDINSMIEASKFLIGTHDFNAFKKSGGNLKTTVRTITNINILKSNDIVEIHVSGDGFLYNMVRIISGTLIEVGLSRRKPEDISIILQSKDRCKAGMCAPARGLYLKELFYN.

Residue D55 is the Nucleophile of the active site. Y113 serves as a coordination point for substrate.

This sequence belongs to the tRNA pseudouridine synthase TruA family. As to quaternary structure, homodimer.

The catalysed reaction is uridine(38/39/40) in tRNA = pseudouridine(38/39/40) in tRNA. Functionally, formation of pseudouridine at positions 38, 39 and 40 in the anticodon stem and loop of transfer RNAs. This Clostridium tetani (strain Massachusetts / E88) protein is tRNA pseudouridine synthase A 2.